Consider the following 455-residue polypeptide: MGQTLFDKVWNRHVLYGKLGEPQLLYIDLHLIHEVTSPQAFEGLRLQNRKLRRPDLTFATLDHNVPTIDIFNIKDEIANKQITTLQKNAIDFGVHIFDMGSDEQGIVHMVGPETGLTQPGKTIVCGDSHTATHGAFGAIAFGIGTSEVEHVFATQTLWQTKPKNLKIDINGTLPTGVYAKDIILHLIKTYGVDFGTGYALEFTGETIKNLSMDGRMTICNMAIEGGAKYGIIQPDDITFEYVKGRPFADNFAKSVDKWRELYSNDDAIFDRVIELDVSTLEPQVTWGTNPEMGVNFSEPFPEINDINDQRAYDYMGLEPGQKAEDIDLGYVFLGSCTNARLSDLIEASHIVKGNKVHPNITAIVVPGSRTVKKEAEKLGLDTIFKNAGFEWREPGCSMCLGMNPDQVPEGVHCASTSNRNFEGRQGKGARTHLVSPAMAAAAIHGKFVDVRKVVV.

Residues Cys-336, Cys-396, and Cys-399 each contribute to the [4Fe-4S] cluster site.

It belongs to the aconitase/IPM isomerase family. LeuC type 1 subfamily. Heterodimer of LeuC and LeuD. [4Fe-4S] cluster serves as cofactor.

It carries out the reaction (2R,3S)-3-isopropylmalate = (2S)-2-isopropylmalate. It functions in the pathway amino-acid biosynthesis; L-leucine biosynthesis; L-leucine from 3-methyl-2-oxobutanoate: step 2/4. Its function is as follows. Catalyzes the isomerization between 2-isopropylmalate and 3-isopropylmalate, via the formation of 2-isopropylmaleate. In Staphylococcus aureus (strain MRSA252), this protein is 3-isopropylmalate dehydratase large subunit.